Here is a 112-residue protein sequence, read N- to C-terminus: Putative pterin-4-alpha-carbinolamine dehydratase (112 aa).

Belongs to the pterin-4-alpha-carbinolamine dehydratase family.

The catalysed reaction is (4aS,6R)-4a-hydroxy-L-erythro-5,6,7,8-tetrahydrobiopterin = (6R)-L-erythro-6,7-dihydrobiopterin + H2O. This is Putative pterin-4-alpha-carbinolamine dehydratase from Hahella chejuensis (strain KCTC 2396).